Consider the following 237-residue polypeptide: Myb-related protein MYBAS1 (237 aa).

HTH myb-type domains lie at 5 to 57 (REEM…VNYL) and 58 to 112 (HPGL…RKKA). The segment at residues 33–57 (WDFVAKVSGLNRTGKSCRLRWVNYL) is a DNA-binding region (H-T-H motif). A Bipartite nuclear localization signal 1 motif is present at residues 62 to 65 (KHGR). Positions 85–108 (WSRIARRLPGRTDNEIKNYWRTHM) form a DNA-binding region, H-T-H motif. Residues 109-117 (RKKAQERRG) carry the Bipartite nuclear localization signal 2 motif.

The protein resides in the nucleus. In terms of biological role, transcription factor. The chain is Myb-related protein MYBAS1 (MYBAS1) from Oryza sativa subsp. japonica (Rice).